Reading from the N-terminus, the 513-residue chain is Cytochrome P450 1A2 (513 aa).

Ser68 carries an O-linked (GlcNAc) serine glycan. Cys456 contacts heme.

The protein belongs to the cytochrome P450 family. In terms of assembly, interacts with PGRMC1; the interaction requires PGRMC1 homodimerization. The cofactor is heme.

The protein resides in the endoplasmic reticulum membrane. It is found in the microsome membrane. It catalyses the reaction an organic molecule + reduced [NADPH--hemoprotein reductase] + O2 = an alcohol + oxidized [NADPH--hemoprotein reductase] + H2O + H(+). The enzyme catalyses 17beta-estradiol + reduced [NADPH--hemoprotein reductase] + O2 = 2-hydroxy-17beta-estradiol + oxidized [NADPH--hemoprotein reductase] + H2O + H(+). The catalysed reaction is 17beta-estradiol + reduced [NADPH--hemoprotein reductase] + O2 = 4-hydroxy-17beta-estradiol + oxidized [NADPH--hemoprotein reductase] + H2O + H(+). It carries out the reaction estrone + reduced [NADPH--hemoprotein reductase] + O2 = 2-hydroxyestrone + oxidized [NADPH--hemoprotein reductase] + H2O + H(+). It catalyses the reaction estrone + reduced [NADPH--hemoprotein reductase] + O2 = 4-hydroxyestrone + oxidized [NADPH--hemoprotein reductase] + H2O + H(+). The enzyme catalyses cholesterol + reduced [NADPH--hemoprotein reductase] + O2 = 25-hydroxycholesterol + oxidized [NADPH--hemoprotein reductase] + H2O + H(+). The catalysed reaction is all-trans-retinol + reduced [NADPH--hemoprotein reductase] + O2 = all-trans-retinal + oxidized [NADPH--hemoprotein reductase] + 2 H2O + H(+). It carries out the reaction all-trans-retinal + reduced [NADPH--hemoprotein reductase] + O2 = all-trans-retinoate + oxidized [NADPH--hemoprotein reductase] + H2O + 2 H(+). It catalyses the reaction (5Z,8Z,11Z,14Z)-eicosatetraenoate + reduced [NADPH--hemoprotein reductase] + O2 = (14R,15S)-epoxy-(5Z,8Z,11Z)-eicosatrienoate + oxidized [NADPH--hemoprotein reductase] + H2O + H(+). The enzyme catalyses (5Z,8Z,11Z,14Z)-eicosatetraenoate + reduced [NADPH--hemoprotein reductase] + O2 = (14S,15R)-epoxy-(5Z,8Z,11Z)-eicosatrienoate + oxidized [NADPH--hemoprotein reductase] + H2O + H(+). The catalysed reaction is (5Z,8Z,11Z,14Z,17Z)-eicosapentaenoate + reduced [NADPH--hemoprotein reductase] + O2 = (17R,18S)-epoxy-(5Z,8Z,11Z,14Z)-eicosatetraenoate + oxidized [NADPH--hemoprotein reductase] + H2O + H(+). It carries out the reaction (4Z,7Z,10Z,13Z,16Z,19Z)-docosahexaenoate + reduced [NADPH--hemoprotein reductase] + O2 = (19R,20S)-epoxy-(4Z,7Z,10Z,13Z,16Z)-docosapentaenoate + oxidized [NADPH--hemoprotein reductase] + H2O + H(+). It catalyses the reaction (5S)-hydroperoxy-(6E,8Z,11Z,14Z)-eicosatetraenoate = 5-oxo-(6E,8Z,11Z,14Z)-eicosatetraenoate + H2O. The enzyme catalyses (12S)-hydroperoxy-(5Z,8Z,10E,14Z)-eicosatetraenoate = 12-oxo-(5Z,8Z,10E,14Z)-eicosatetraenoate + H2O. The catalysed reaction is (15S)-hydroperoxy-(5Z,8Z,11Z,13E)-eicosatetraenoate = 15-oxo-(5Z,8Z,11Z,13E)-eicosatetraenoate + H2O. It carries out the reaction (13S)-hydroperoxy-(9Z,11E)-octadecadienoate = 13-oxo-(9Z,11E)-octadecadienoate + H2O. It catalyses the reaction (5Z,8Z,11Z,14Z)-eicosatetraenoate + reduced [NADPH--hemoprotein reductase] + O2 = 13-hydroxy-(5Z,8Z,11Z,14Z)-eicosatetraenoate + oxidized [NADPH--hemoprotein reductase] + H2O + H(+). The enzyme catalyses (5Z,8Z,11Z,14Z)-eicosatetraenoate + reduced [NADPH--hemoprotein reductase] + O2 = 19-hydroxy-(5Z,8Z,11Z,14Z)-eicosatetraenoate + oxidized [NADPH--hemoprotein reductase] + H2O + H(+). The catalysed reaction is (9Z,12Z)-octadecadienoate + reduced [NADPH--hemoprotein reductase] + O2 = 11-hydroxy-(9Z,12Z)-octadecadienoate + oxidized [NADPH--hemoprotein reductase] + H2O + H(+). It functions in the pathway cofactor metabolism; retinol metabolism. The protein operates within steroid metabolism; cholesterol metabolism. Its pathway is lipid metabolism; arachidonate metabolism. In terms of biological role, a cytochrome P450 monooxygenase involved in the metabolism of various endogenous substrates, including fatty acids, steroid hormones and vitamins. Mechanistically, uses molecular oxygen inserting one oxygen atom into a substrate, and reducing the second into a water molecule, with two electrons provided by NADPH via cytochrome P450 reductase (NADPH--hemoprotein reductase). Catalyzes the hydroxylation of carbon-hydrogen bonds. Exhibits high catalytic activity for the formation of hydroxyestrogens from estrone (E1) and 17beta-estradiol (E2), namely 2-hydroxy E1 and E2. Metabolizes cholesterol toward 25-hydroxycholesterol, a physiological regulator of cellular cholesterol homeostasis. May act as a major enzyme for all-trans retinoic acid biosynthesis in the liver. Catalyzes two successive oxidative transformation of all-trans retinol to all-trans retinal and then to the active form all-trans retinoic acid. Primarily catalyzes stereoselective epoxidation of the last double bond of polyunsaturated fatty acids (PUFA), displaying a strong preference for the (R,S) stereoisomer. Catalyzes bisallylic hydroxylation and omega-1 hydroxylation of PUFA. May also participate in eicosanoids metabolism by converting hydroperoxide species into oxo metabolites (lipoxygenase-like reaction, NADPH-independent). Plays a role in the oxidative metabolism of xenobiotics. Catalyzes the N-hydroxylation of heterocyclic amines and the O-deethylation of phenacetin. Metabolizes caffeine via N3-demethylation. The polypeptide is Cytochrome P450 1A2 (Cyp1a2) (Rattus norvegicus (Rat)).